Here is a 124-residue protein sequence, read N- to C-terminus: Probable cytochrome b5 1 (124 aa).

Residues 3 to 79 enclose the Cytochrome b5 heme-binding domain; the sequence is VKYFEPEEIV…LEEMYIGDLK (77 aa). Heme is bound by residues H38 and H62. The chain crosses the membrane as a helical span at residues 100-120; that stretch reads PPLPLLIALIVLPAIAVIVFV.

This sequence belongs to the cytochrome b5 family.

Its subcellular location is the endoplasmic reticulum membrane. The protein resides in the microsome membrane. Its function is as follows. Membrane bound hemoprotein which function as an electron carrier for several membrane bound oxygenases. The sequence is that of Probable cytochrome b5 1 from Schizosaccharomyces pombe (strain 972 / ATCC 24843) (Fission yeast).